A 1848-amino-acid chain; its full sequence is Histone-lysine N-methyltransferase, H3 lysine-79 specific (1848 aa).

Positions 19–336 (DVISFAWPLQ…ILERYFQRLK (318 aa)) constitute a DOT1 domain. S-adenosyl-L-methionine is bound by residues 142-145 (YGET), 165-174 (FIDLGSGVGQ), glutamate 192, and 228-229 (DF). Disordered regions lie at residues 338 to 537 (KGGN…TRKA), 558 to 593 (AVSVPSKESSSKEDPPRAASAGPGRKGRMKKGARGR), 886 to 908 (LNSVKNSRRNREHRARSQEWPEV), 960 to 996 (PPPATAPVSIKSSPGHHYKDTTLMPAPKQQQQQQMTL), 1033 to 1075 (LNED…AQSL), 1165 to 1190 (HMASLYPAGQQTTPADLGYQRRRSSV), 1221 to 1333 (QRQQ…TQVS), 1345 to 1374 (QEKLSQHVTPQATPPLPGHGGAPTSGKTIG), 1432 to 1463 (VHVRPLSEESQDPQPTSYAQERGPGLGAGGAA), 1486 to 1508 (ARANAGTAPPATHSSSARSGRDY), 1529 to 1559 (EQQQKQSKGAGSAGSSSLRGPRLNGANPPLE), 1573 to 1604 (KYKEETEERQRRAAAAASSSAGPPAGMELPTH), 1637 to 1713 (SPLA…VDPP), and 1731 to 1757 (QLSHHQQQQQQMLHHHQSQQQQHLQLT). Residues 339–360 (GGNDHESVGTVRTTRDRAKREA) are compositionally biased toward basic and acidic residues. The span at 364 to 373 (QHHHNNHHSN) shows a compositional bias: basic residues. Low complexity predominate over residues 391–405 (ATATAAHQQRHQSQS). Polar residues predominate over residues 419 to 428 (SGQQAASKTR). Composition is skewed to low complexity over residues 429–439 (QQLQHQHNQQQ) and 453–474 (DATNGNGGNTTTATNTTSASNG). Serine 491, serine 492, and serine 494 each carry phosphoserine. The segment covering 507 to 518 (GSNGGSIGGGSV) has biased composition (gly residues). Basic residues-rich tracts occupy residues 526–535 (TQKKRKKLTR) and 582–593 (RKGRMKKGARGR). The segment covering 1221 to 1235 (QRQQMRVEEQQQQQQ) has biased composition (low complexity). A compositionally biased stretch (basic residues) spans 1236 to 1263 (HQHHHHHHHHHPQHRLPQHVQHQHPHQH). A compositionally biased stretch (low complexity) spans 1289 to 1300 (EPPQTQPLELLP). Serine 1318, serine 1324, and serine 1325 each carry phosphoserine. Low complexity predominate over residues 1532 to 1545 (QKQSKGAGSAGSSS). The span at 1574 to 1583 (YKEETEERQR) shows a compositional bias: basic and acidic residues. Low complexity-rich tracts occupy residues 1585-1598 (AAAAASSSAGPPAG) and 1681-1696 (HDATTPSPTPSSSSSS). The segment covering 1697–1706 (CGRRSNSNNG) has biased composition (polar residues).

It belongs to the class I-like SAM-binding methyltransferase superfamily. DOT1 family. Broadly expressed in most tissues. Expressed in a large subset of neurons and in a small subset of glial cells.

The protein localises to the nucleus. It carries out the reaction L-lysyl(79)-[histone H3] + 3 S-adenosyl-L-methionine = N(6),N(6),N(6)-trimethyl-L-lysyl(79)-[histone H3] + 3 S-adenosyl-L-homocysteine + 3 H(+). Histone methyltransferase. Methylates 'Lys-79' of histone H3. Required for Polycomb Group (PcG) and trithorax Group (trxG) maintenance of expression. Also involved in telomeric silencing but do not in centric heterochromatin. Probably participates in pairing sensitivity. This Drosophila melanogaster (Fruit fly) protein is Histone-lysine N-methyltransferase, H3 lysine-79 specific (gpp).